The following is a 272-amino-acid chain: Phosphate import ATP-binding protein PstB (272 aa).

The ABC transporter domain occupies 20–267 (VKKEVVYETN…PADQRTADYI (248 aa)). 58 to 65 (GPSGCGKS) contacts ATP.

The protein belongs to the ABC transporter superfamily. Phosphate importer (TC 3.A.1.7) family. As to quaternary structure, the complex is composed of two ATP-binding proteins (PstB), two transmembrane proteins (PstC and PstA) and a solute-binding protein (PstS).

It is found in the cell membrane. The catalysed reaction is phosphate(out) + ATP + H2O = ADP + 2 phosphate(in) + H(+). Functionally, part of the ABC transporter complex PstSACB involved in phosphate import. Responsible for energy coupling to the transport system. In Geobacillus kaustophilus (strain HTA426), this protein is Phosphate import ATP-binding protein PstB.